Consider the following 309-residue polypeptide: L-arabinose 1-dehydrogenase (NAD(P)(+)) (309 aa).

NADP(+) is bound by residues I15 and 37–38; that span reads SR. The active-site Proton donor is the K91. D169 lines the NADP(+) pocket.

This sequence belongs to the Gfo/Idh/MocA family. As to quaternary structure, monomer.

It carries out the reaction alpha-L-arabinopyanose + NAD(+) = L-arabinono-1,4-lactone + NADH + H(+). The catalysed reaction is alpha-L-arabinopyanose + NADP(+) = L-arabinono-1,4-lactone + NADPH + H(+). It catalyses the reaction D-galactose + NAD(+) = D-galactono-1,4-lactone + NADH + H(+). The enzyme catalyses D-galactose + NADP(+) = D-galactono-1,5-lactone + NADPH + H(+). It participates in carbohydrate degradation; L-arabinose degradation via L-arabinono-1,4-lactone pathway. Its function is as follows. Catalyzes the NAD(P)(+)-dependent conversion of L-arabinose to L-arabino-gamma-lactone. Is involved in a degradation pathway of L-arabinose that allows A.brasilense to grow on L-arabinose as a sole carbon source. Prefers NADP(+) to NAD(+) as electron acceptor. Displays high catalytic efficiency for both L-arabinose and D-galactose in vitro. However, the enzyme appears to be involved in the metabolism of L-arabinose but not D-galactose in vivo. To a lesser extent, is also active on D-talose and D-xylose as substrates in vitro, but not with D-arabinose, D-glucose, D-ribose, L-xylose, L-mannose, L-lyxose, and D-fructose. The polypeptide is L-arabinose 1-dehydrogenase (NAD(P)(+)) (araA) (Azospirillum brasilense).